We begin with the raw amino-acid sequence, 282 residues long: 3-hydroxyanthranilate 3,4-dioxygenase (282 aa).

Positions 1-160 are domain A (catalytic); that stretch reads MAMAINVKKW…SKQYKSGKPD (160 aa). Arg43 contacts O2. Fe cation-binding residues include His47, Glu53, and His91. A substrate-binding site is contributed by Glu53. Positions 95 and 105 each coordinate substrate. The tract at residues 161-177 is linker; the sequence is PDQPKAKMPFCLSTEQV. Residues 178–282 form a domain B region; the sequence is MEPFSFQHWL…LSTSQVPLPM (105 aa).

The protein belongs to the 3-HAO family. In terms of assembly, monomer. The cofactor is Fe(2+).

It is found in the cytoplasm. It localises to the cytosol. It catalyses the reaction 3-hydroxyanthranilate + O2 = (2Z,4Z)-2-amino-3-carboxymuconate 6-semialdehyde. It participates in cofactor biosynthesis; NAD(+) biosynthesis; quinolinate from L-kynurenine: step 3/3. Catalyzes the oxidative ring opening of 3-hydroxyanthranilate to 2-amino-3-carboxymuconate semialdehyde, which spontaneously cyclizes to quinolinate. This is 3-hydroxyanthranilate 3,4-dioxygenase (haao) from Xenopus laevis (African clawed frog).